Reading from the N-terminus, the 420-residue chain is Histidine--tRNA ligase (420 aa).

Belongs to the class-II aminoacyl-tRNA synthetase family. In terms of assembly, homodimer.

The protein resides in the cytoplasm. It carries out the reaction tRNA(His) + L-histidine + ATP = L-histidyl-tRNA(His) + AMP + diphosphate + H(+). In Anaplasma phagocytophilum (strain HZ), this protein is Histidine--tRNA ligase.